We begin with the raw amino-acid sequence, 878 residues long: MASLRLPRANPLAFTRWPVTVITAIVYLALLIPLLVVHHVVPSAPSSPPSGLNISEAWADLQVLTNGFHPYNSRRNDVIHSWLLRRINEILDSTPLEQEYRALDEEKPDVFVFDDVYSNLTTYGGTLKDADLGVYFEGTNVIVYIRGWEDDTEHWWEAPNGVPTSRGGVLVNSHYDSVSTGFGATDDGVGVVTCLQLVKYFTTPGHAPRRGLVVLFNNGEEDFLNGARVYSQHPISKLPHTFLNLEGAGAGGRATLFRSSDFEVTGPYMRSPHPFGSVLSANGFDTGLIASQTDYVIFQGNMGLRGLDVAFMEPRARYHTNQDDTRHTSKDSVWHMLSAAVATTEGLVSDSTDRFDGAPNTDGGVPSGSGSQAVWFDLFGSTFVLFQLHTLFALLVTLLIVGPLTLLFTSIALTKADKMYLFRSSAKSEDRLDVVPLQGLRGFFRFPFLFGIPTVVTVGLAYLVTKVNPYIIHSSAYAVWSMMVAAWVFLAWFVSRVADFARPSAFHRIYTLTWMYVLSWVSAVIATVYANQRGLAGGYFIFFFHAGIFLATWISYLELFALPSKTEYANQLRSVSGRASGHGSRRGTTSGEDDGEEAEEEPTESTSLLGSGQRTTFANYVRVGGDNHAVAEEEVIDPNVYGREQAWSYALPKWTWGLQLLLTAPITLIMVGPLALLTISAISQTGQDGGHPLFAYVAIAIFTTIMLTPLLPFIHRYTYHVPLFLLAVFLGTLIYNLVAFPFSDSNRLKLYYVQEVDLDTGVNSATFAGLSPFVKDVSQELPSAAGQTVSCEWHTKRRNLLSCSWEGIAPQPVEGDHPMKDWGALKGNVVCLWSDHNQPGVLPALDEAIQFLPVWAAVTKGSDGLVEGRRAFEIGNDD.

The Cytoplasmic portion of the chain corresponds to 1-16; that stretch reads MASLRLPRANPLAFTR. Residues 17–37 form a helical membrane-spanning segment; the sequence is WPVTVITAIVYLALLIPLLVV. The Vacuolar portion of the chain corresponds to 38 to 390; sequence HHVVPSAPSS…STFVLFQLHT (353 aa). Residues Asn53 and Asn119 are each glycosylated (N-linked (GlcNAc...) asparagine). Zn(2+)-binding residues include His174 and Asp186. The active-site Proton acceptor is Glu220. Zn(2+) contacts are provided by Glu221, Glu246, and His319. Residues 391–411 traverse the membrane as a helical segment; that stretch reads LFALLVTLLIVGPLTLLFTSI. The Cytoplasmic segment spans residues 412 to 442; that stretch reads ALTKADKMYLFRSSAKSEDRLDVVPLQGLRG. The chain crosses the membrane as a helical span at residues 443 to 463; the sequence is FFRFPFLFGIPTVVTVGLAYL. Residues 464-473 lie on the Vacuolar side of the membrane; the sequence is VTKVNPYIIH. The helical transmembrane segment at 474-494 threads the bilayer; that stretch reads SSAYAVWSMMVAAWVFLAWFV. Over 495-508 the chain is Cytoplasmic; the sequence is SRVADFARPSAFHR. The chain crosses the membrane as a helical span at residues 509-529; that stretch reads IYTLTWMYVLSWVSAVIATVY. Residues 530-533 are Vacuolar-facing; that stretch reads ANQR. Residues 534–554 form a helical membrane-spanning segment; that stretch reads GLAGGYFIFFFHAGIFLATWI. Topologically, residues 555-659 are cytoplasmic; sequence SYLELFALPS…ALPKWTWGLQ (105 aa). A compositionally biased stretch (low complexity) spans 577 to 590; sequence GRASGHGSRRGTTS. The disordered stretch occupies residues 577 to 611; it reads GRASGHGSRRGTTSGEDDGEEAEEEPTESTSLLGS. A compositionally biased stretch (acidic residues) spans 591-603; sequence GEDDGEEAEEEPT. Residues 660–680 traverse the membrane as a helical segment; that stretch reads LLLTAPITLIMVGPLALLTIS. At 681–693 the chain is on the vacuolar side; that stretch reads AISQTGQDGGHPL. Residues 694–714 traverse the membrane as a helical segment; sequence FAYVAIAIFTTIMLTPLLPFI. Residues 715 to 721 lie on the Cytoplasmic side of the membrane; the sequence is HRYTYHV. The helical transmembrane segment at 722–742 threads the bilayer; the sequence is PLFLLAVFLGTLIYNLVAFPF. Residues 743-878 lie on the Vacuolar side of the membrane; the sequence is SDSNRLKLYY…RRAFEIGNDD (136 aa).

Belongs to the peptidase M28 family. Requires Zn(2+) as cofactor.

It localises to the vacuole membrane. May be involved in vacuolar sorting and osmoregulation. The protein is Vacuolar membrane protease of Aspergillus flavus (strain ATCC 200026 / FGSC A1120 / IAM 13836 / NRRL 3357 / JCM 12722 / SRRC 167).